The primary structure comprises 356 residues: Histidinol-phosphate aminotransferase (356 aa).

The residue at position 214 (lysine 214) is an N6-(pyridoxal phosphate)lysine.

Belongs to the class-II pyridoxal-phosphate-dependent aminotransferase family. Histidinol-phosphate aminotransferase subfamily. Homodimer. It depends on pyridoxal 5'-phosphate as a cofactor.

The catalysed reaction is L-histidinol phosphate + 2-oxoglutarate = 3-(imidazol-4-yl)-2-oxopropyl phosphate + L-glutamate. The protein operates within amino-acid biosynthesis; L-histidine biosynthesis; L-histidine from 5-phospho-alpha-D-ribose 1-diphosphate: step 7/9. This chain is Histidinol-phosphate aminotransferase, found in Escherichia coli O6:K15:H31 (strain 536 / UPEC).